The chain runs to 162 residues: Small ribosomal subunit protein uS5 (162 aa).

Residues 11–74 (LTDRVVHISR…EQAKKNLIKV (64 aa)) enclose the S5 DRBM domain.

The protein belongs to the universal ribosomal protein uS5 family. Part of the 30S ribosomal subunit. Contacts proteins S4 and S8.

With S4 and S12 plays an important role in translational accuracy. In terms of biological role, located at the back of the 30S subunit body where it stabilizes the conformation of the head with respect to the body. The sequence is that of Small ribosomal subunit protein uS5 from Pelobacter propionicus (strain DSM 2379 / NBRC 103807 / OttBd1).